The following is a 631-amino-acid chain: MSTTKLTRREQREHAQRFIDTLAGTAFPNSRRIYVHGSQADIRVPMREIQLSPTLVGGDKDKPRYETNEPIPVYDTSGPYGDPDISIDVRQGLAKLRQPWIDARNDCAPLSERSSAYTKARLADDGLDELRFSGLLTPKRAVAGKCVTQLHYARQGIVTPEMEFIAIRENMGRERIRSEVLRQQHAGEGFGAHLPENITPEFVRDEVAAGRAIIPANINHPESEPMIIGRNFLVKVNANIGNSAVTSSIEEEVEKLVWSTRWGADTVMDLSTGRYIHETREWILRNSPVPIGTVPIYQALEKVNGIAENLTWQVFRDTLLEQAEQGVDYFTIHAGVLLRYVPMTAKRLTGIVSRGGSIMAKWCLSHHQENFLYQHFREICEICAAYDVSLSLGDGLRPGSIQDANDEAQFSELRTLGELTKIAWEYDVQVMIEGPGHVPMQMIRRNMTEQLEHCHEAPFYTLGPLTTDIAPGYDHFTSGIGAAMIGWFGCAMLCYVTPKEHLGLPNKEDVKQGLITYKIAAHAADLAKGHPGAQIRDNAMSKARFEFRWEDQFNLALDPFTARAYHDETLPQESGKVAHFCSMCGPKFCSMKITQEVRDYAAKQSIEAGMADMSNNFRARGGEIYLKQEEA.

A disordered region spans residues 54–80; that stretch reads TLVGGDKDKPRYETNEPIPVYDTSGPY. Over residues 58–67 the composition is skewed to basic and acidic residues; that stretch reads GDKDKPRYET. Substrate contacts are provided by residues Asn239, Met268, Tyr297, His333, 353 to 355, 394 to 397, and Glu433; these read SRG and DGLR. His437 is a binding site for Zn(2+). Tyr460 contributes to the substrate binding site. His501 serves as a coordination point for Zn(2+). 3 residues coordinate [4Fe-4S] cluster: Cys581, Cys584, and Cys589.

It belongs to the ThiC family. As to quaternary structure, homodimer. Requires [4Fe-4S] cluster as cofactor.

It carries out the reaction 5-amino-1-(5-phospho-beta-D-ribosyl)imidazole + S-adenosyl-L-methionine = 4-amino-2-methyl-5-(phosphooxymethyl)pyrimidine + CO + 5'-deoxyadenosine + formate + L-methionine + 3 H(+). It functions in the pathway cofactor biosynthesis; thiamine diphosphate biosynthesis. Functionally, catalyzes the synthesis of the hydroxymethylpyrimidine phosphate (HMP-P) moiety of thiamine from aminoimidazole ribotide (AIR) in a radical S-adenosyl-L-methionine (SAM)-dependent reaction. In Klebsiella pneumoniae subsp. pneumoniae (strain ATCC 700721 / MGH 78578), this protein is Phosphomethylpyrimidine synthase.